An 83-amino-acid polypeptide reads, in one-letter code: Exodeoxyribonuclease 7 small subunit (83 aa).

This sequence belongs to the XseB family. In terms of assembly, heterooligomer composed of large and small subunits.

It is found in the cytoplasm. It catalyses the reaction Exonucleolytic cleavage in either 5'- to 3'- or 3'- to 5'-direction to yield nucleoside 5'-phosphates.. Functionally, bidirectionally degrades single-stranded DNA into large acid-insoluble oligonucleotides, which are then degraded further into small acid-soluble oligonucleotides. This Brucella melitensis biotype 1 (strain ATCC 23456 / CCUG 17765 / NCTC 10094 / 16M) protein is Exodeoxyribonuclease 7 small subunit.